The primary structure comprises 240 residues: Mannosyl-D-glycerate transport/metabolism system repressor MngR (240 aa).

One can recognise an HTH gntR-type domain in the interval 4-72 (KPLYRQIADR…QGSGTYVKEE (69 aa)). Residues 32 to 51 (ESALQTEFGVSRVTVRQALR) constitute a DNA-binding region (H-T-H motif).

Its function is as follows. Represses mngA and mngB. Regulates its own expression. This chain is Mannosyl-D-glycerate transport/metabolism system repressor MngR (mngR), found in Escherichia coli (strain K12).